A 187-amino-acid chain; its full sequence is uncharacterized protein (187 aa).

This is an uncharacterized protein from Homo sapiens (Human).